A 440-amino-acid polypeptide reads, in one-letter code: Tetratricopeptide repeat protein 5 (440 aa).

TPR repeat units follow at residues 7-61 (EEVK…EEVV), 68-98 (AQVLMLTGKALNVTPDYSPKAEELLSKAVKL), 103-130 (VEAWNQLGEVYWKKGDVAAAHTCFSGAL), 136-174 (KVSLQNLSMVLRQLRTDSGDEHSRHVMDSVRQAKLAVQM), and 179-216 (GRSWYILGNAYLSLYFNTGQNPKISQQALSAYAQAEKV). Positions 13–24 (LQKLQELVDQLY) match the Nuclear export signal motif. A Phosphoserine; by ATM modification is found at Ser203. Position 221 is a phosphoserine; by CHEK2 (Ser221). A TPR 6 repeat occupies 224–253 (PDLHLNRATLHKYEENYGEALEGFSRAAAL). Residues 285-287 (KTK) form a mediates interaction with 28S rRNA of ribosome-coding tubulin region.

In terms of assembly, interacts with JMY and p300/EP300; the interaction occurs in the nucleus and augments the association between JMY and p300/EP300 in response to DNA damage. Interacts with PRMT5; the interaction is DNA damage-dependent and promotes PRMT5 interaction with p53/TP53 and subsequent methylation. Forms a complex with HSF1 and p300/EP300; these interactions augment chromatin-bound HSF1 and p300/EP300 histone acetyltransferase activity, resulting in enhanced heat-shock-responsive transcription. Interacts with JMY; the interaction occurs in the cytoplasm and results in the inhibition of JYM's nucleation activity. Interacts with ribosome-coding tubulin (via 60S subunit 28S rRNA and protein uL24/RPL26) and the N-terminal of nascent tubulin polypeptide (via alpha-tubulin MREC motif and beta-tubulin MREI motif); these interactions result in tubulin mRNA-targeted degradation. Interacts with ATP5F1B; the interaction occurs in the mitochondria and results in ATP production decrease. Interacts with p53/TP53; the interaction occurs in the mitochondria and results in increased apoptosis. Post-translationally, phosphorylation by ATM kinase induces nuclear accumulation while interfering with nuclear export, and phosphorylation by CHEK2 kinase enhances nuclear stability.

It localises to the nucleus. Its subcellular location is the cytoplasm. The protein resides in the cytoplasmic vesicle. The protein localises to the mitochondrion matrix. Functionally, cofactor involved in the regulation of various cellular mechanisms such as actin regulation, autophagy, chromatin regulation and DNA repair. In physiological conditions, interacts with cofactor JMY in the cytoplasm which prevents JMY's actin nucleation activity and ability to activate the Arp2/3 complex. Acts as a negative regulator of nutrient stress-induced autophagy by inhibiting JMY's interaction with MAP1LC3B, thereby preventing autophagosome formation. Involves in tubulin autoregulation by promoting its degradation in response to excess soluble tubulin. To do so, associates with the active ribosome near the ribosome exit tunnel and with nascent tubulin polypeptides early during their translation, triggering tubulin mRNA-targeted degradation. Following DNA damage, phosphorylated by DNA damage responsive protein kinases ATM and CHEK2, leading to its nuclear accumulation and stability. Nuclear TTC5/STRAP promotes the assembly of a stress-responsive p53/TP53 coactivator complex, which includes the coactivators JMY and p300, thereby increasing p53/TP53-dependent transcription and apoptosis. Also recruits arginine methyltransferase PRMT5 to p53/TP53 when DNA is damaged, allowing PRMT5 to methylate p53/TP53. In DNA stress conditions, also prevents p53/TP53 degradation by E3 ubiquitin ligase MDM2. Upon heat-shock stress, forms a chromatin-associated complex with heat-shock factor 1 HSF1 and p300/EP300 to stimulate heat-shock-responsive transcription, thereby increasing cell survival. Mitochondrial TTC5/STRAP interacts with ATP synthase subunit beta ATP5F1B which decreased ATP synthase activity and lowers mitochondrial ATP production, thereby regulating cellular respiration and mitochondrial-dependent apoptosis. Mitochondrial TTC5/STRAP also regulates p53/TP53-mediated apoptosis. The protein is Tetratricopeptide repeat protein 5 (TTC5) of Bos taurus (Bovine).